Reading from the N-terminus, the 406-residue chain is MKIYLVGGAVRDRLLQRPAGDRDWVVVGATPAQMEAQGYSAVGRDFPVFLHPKTGEEYALARTERKSGRGYRGFVVDADPAVTLEEDLQRRDFTINAIACDEDTGTLVDPYGGVRDIEQRVLRHVGPAFVEDPLRVLRAARFMAHFAPLDFTVAPETMDLMRNVAASGELDALVPERVWQELRKALVSAQPSAFLRTLHDAHALGPILPELEALYGVPQRAEFHPEVDTGIHQEMVSDMAAKLAPGDDLVGFAALTHDLGKGLTPPEEWPRHIMHEQRGIKPLKELCARLRVPTEHQQLAEAVCREHLNVHRIDELRDATVLELLGRCDALRRPERVARIALCCEADKRGRLGFEDSDYPQGETLKRLHQAALSVQARDLDTTHLKGPAIGEALAKARVKAIAAAR.

Positions 8 and 11 each coordinate ATP. The CTP site is built by G8 and R11. Positions 21 and 23 each coordinate Mg(2+). Residues R91, R138, and R141 each contribute to the ATP site. R91, R138, and R141 together coordinate CTP. Residues 229 to 331 (TGIHQEMVSD…LELLGRCDAL (103 aa)) enclose the HD domain.

Belongs to the tRNA nucleotidyltransferase/poly(A) polymerase family. Bacterial CCA-adding enzyme type 1 subfamily. Monomer. Can also form homodimers and oligomers. It depends on Mg(2+) as a cofactor. Ni(2+) is required as a cofactor.

The enzyme catalyses a tRNA precursor + 2 CTP + ATP = a tRNA with a 3' CCA end + 3 diphosphate. The catalysed reaction is a tRNA with a 3' CCA end + 2 CTP + ATP = a tRNA with a 3' CCACCA end + 3 diphosphate. Its function is as follows. Catalyzes the addition and repair of the essential 3'-terminal CCA sequence in tRNAs without using a nucleic acid template. Adds these three nucleotides in the order of C, C, and A to the tRNA nucleotide-73, using CTP and ATP as substrates and producing inorganic pyrophosphate. tRNA 3'-terminal CCA addition is required both for tRNA processing and repair. Also involved in tRNA surveillance by mediating tandem CCA addition to generate a CCACCA at the 3' terminus of unstable tRNAs. While stable tRNAs receive only 3'-terminal CCA, unstable tRNAs are marked with CCACCA and rapidly degraded. This Stenotrophomonas maltophilia (strain R551-3) protein is Multifunctional CCA protein.